The following is a 478-amino-acid chain: MTTALSEQQTGLSGRVARVIGPVVDVEFPRGELPALFNALTVDVDLEAVAKTITLEVAQHLGDNIVRAVSMAPTDGLIRGAEVKDTGKPISVPVGDTVKGHVFNALGDCLDEPGLGRDGEQWSIHRKPPAFDQLEGKTEILETGIKVIDLLTPYVKGGKIGLFGGAGVGKTVLIQEMITRIAREFSGTSVFAGVGERTREGTDLFLEMEEMGVLQDTALVFGQMDEPPGVRMRVALSGLTMAEYFRDVQHQDVLLFIDNIFRFSQAGSEVSTLLGRMPSAVGYQPTLADEMGELQERITSTKGRSITSLQAVYVPADDYTDPAPATVFAHLDATTELDRSIASKGIYPAVNPLTSTSRILEPGIVGEEHYQVAQRVINILQKNKELQDIIAILGMDELSEEDKITVQRARRIERFLGQNFFVAEKFTGLPGSYVPLKDTIDAFRRICDGEYDAYPERCFNGLGGLDDVEAEYKKLQEK.

G164 to T171 is a binding site for ATP.

It belongs to the ATPase alpha/beta chains family. As to quaternary structure, F-type ATPases have 2 components, CF(1) - the catalytic core - and CF(0) - the membrane proton channel. CF(1) has five subunits: alpha(3), beta(3), gamma(1), delta(1), epsilon(1). CF(0) has three main subunits: a(1), b(2) and c(9-12). The alpha and beta chains form an alternating ring which encloses part of the gamma chain. CF(1) is attached to CF(0) by a central stalk formed by the gamma and epsilon chains, while a peripheral stalk is formed by the delta and b chains.

The protein resides in the cell membrane. The enzyme catalyses ATP + H2O + 4 H(+)(in) = ADP + phosphate + 5 H(+)(out). In terms of biological role, produces ATP from ADP in the presence of a proton gradient across the membrane. The catalytic sites are hosted primarily by the beta subunits. The protein is ATP synthase subunit beta of Corynebacterium kroppenstedtii (strain DSM 44385 / JCM 11950 / CIP 105744 / CCUG 35717).